The primary structure comprises 244 residues: MNILILDDEMLARQELTFLIQQSKELDHPDIFEAEDISSAEKILFRQQIDLIFLDISLSEENGFTLANQLEQLAHPPLVVFATAYDHYAVKAFESNAADYILKPFEQGRVDKALAKVKKIQHLSTIDETATTEKKGMELLTLTLADRSIVLKMPDIVAASIEDGELTVSTKNTSYTIKKTLNWFKTRAKTNYFLQIHRNTVVNLEMIQEIQPWFNHTLLLVMVNGEKFPVGRSYMKELNAHLTL.

The region spanning 2–118 (NILILDDEML…RVDKALAKVK (117 aa)) is the Response regulatory domain. Aspartate 55 carries the 4-aspartylphosphate modification. The HTH LytTR-type domain occupies 140 to 244 (LTLTLADRSI…MKELNAHLTL (105 aa)).

In terms of processing, phosphorylated by LytS.

The protein localises to the cytoplasm. In terms of biological role, member of the two-component regulatory system LytR/LytS that probably regulates genes involved in cell wall metabolism. This Streptococcus mutans serotype c (strain ATCC 700610 / UA159) protein is Sensory transduction protein LytR (lytR).